We begin with the raw amino-acid sequence, 116 residues long: Immunoglobulin heavy variable 3-13 (116 aa).

An N-terminal signal peptide occupies residues 1–19; the sequence is MELGLSWVFLVAILEGVQC. The interval 20–44 is framework-1; it reads EVQLVESGGGLVQPGGSLRLSCAAS. Residues 20 to 116 form the Ig-like domain; that stretch reads EVQLVESGGG…GDTAVYYCAR (97 aa). A disulfide bridge links cysteine 41 with cysteine 114. The interval 45 to 52 is complementarity-determining-1; it reads GFTFSSYD. The segment at 53–69 is framework-2; it reads MHWVRQATGKGLEWVSA. Residues 70–76 are complementarity-determining-2; sequence IGTAGDP. A framework-3 region spans residues 77-114; the sequence is YYPGSVKGRFTISRENAKNSLYLQMNSLRAGDTAVYYC. Positions 115–116 are complementarity-determining-3; it reads AR.

As to quaternary structure, immunoglobulins are composed of two identical heavy chains and two identical light chains; disulfide-linked.

Its subcellular location is the secreted. It is found in the cell membrane. In terms of biological role, v region of the variable domain of immunoglobulin heavy chains that participates in the antigen recognition. Immunoglobulins, also known as antibodies, are membrane-bound or secreted glycoproteins produced by B lymphocytes. In the recognition phase of humoral immunity, the membrane-bound immunoglobulins serve as receptors which, upon binding of a specific antigen, trigger the clonal expansion and differentiation of B lymphocytes into immunoglobulins-secreting plasma cells. Secreted immunoglobulins mediate the effector phase of humoral immunity, which results in the elimination of bound antigens. The antigen binding site is formed by the variable domain of one heavy chain, together with that of its associated light chain. Thus, each immunoglobulin has two antigen binding sites with remarkable affinity for a particular antigen. The variable domains are assembled by a process called V-(D)-J rearrangement and can then be subjected to somatic hypermutations which, after exposure to antigen and selection, allow affinity maturation for a particular antigen. The protein is Immunoglobulin heavy variable 3-13 of Homo sapiens (Human).